A 218-amino-acid chain; its full sequence is Probable transaldolase (218 aa).

Lysine 83 (schiff-base intermediate with substrate) is an active-site residue.

This sequence belongs to the transaldolase family. Type 3B subfamily.

It localises to the cytoplasm. The enzyme catalyses D-sedoheptulose 7-phosphate + D-glyceraldehyde 3-phosphate = D-erythrose 4-phosphate + beta-D-fructose 6-phosphate. It participates in carbohydrate degradation; pentose phosphate pathway; D-glyceraldehyde 3-phosphate and beta-D-fructose 6-phosphate from D-ribose 5-phosphate and D-xylulose 5-phosphate (non-oxidative stage): step 2/3. Its function is as follows. Transaldolase is important for the balance of metabolites in the pentose-phosphate pathway. This Kosmotoga olearia (strain ATCC BAA-1733 / DSM 21960 / TBF 19.5.1) protein is Probable transaldolase.